The chain runs to 196 residues: Protein TEX261 (196 aa).

Transmembrane regions (helical) follow at residues 3 to 23 (FMYLLSWLSLFIQVAFITLAV), 42 to 62 (SRIIKYMIWFSTAVLIGLYVF), 70 to 90 (IGVGLFTNLVYFGLLQTFPFI), 97 to 117 (FILSCGLVVVNHYLAFQFFAE), and 125 to 145 (VLAYFTFCLWIIPFAFFVSLS).

The protein belongs to the SVP26 family.

It localises to the membrane. The protein is Protein TEX261 (TEX261) of Homo sapiens (Human).